The chain runs to 405 residues: Secreted aspartic protease 8 (405 aa).

Positions 1 to 25 are cleaved as a signal peptide; it reads MVSIITFTKNVLVTLAFALLAQGLA. N-linked (GlcNAc...) asparagine glycosylation is present at Asn-50. Positions 52 to 78 are disordered; that stretch reads TAHGQHHQSQQQQQQQQQQPAQKRGTV. Low complexity predominate over residues 58–70; sequence HQSQQQQQQQQQQ. The Peptidase A1 domain occupies 89 to 392; sequence YAATITVGSN…DLDGNTISLA (304 aa). Asp-107 is an active-site residue. 107-109 contacts pepstatin A; sequence DTG. Cysteines 122 and 134 form a disulfide. Asp-292 is a catalytic residue. Residue 292 to 296 coordinates pepstatin A; the sequence is DSGTT. Cysteines 327 and 358 form a disulfide.

This sequence belongs to the peptidase A1 family. As to quaternary structure, monomer.

Its subcellular location is the secreted. The enzyme catalyses Preferential cleavage at the carboxyl of hydrophobic amino acids, but fails to cleave 15-Leu-|-Tyr-16, 16-Tyr-|-Leu-17 and 24-Phe-|-Phe-25 of insulin B chain. Activates trypsinogen, and degrades keratin.. In terms of biological role, secreted aspartic peptidases (SAPs) are a group of ten acidic hydrolases considered as key virulence factors. These enzymes supply the fungus with nutrient amino acids as well as are able to degrade the selected host's proteins involved in the immune defense. Moreover, acts toward human hemoglobin though limited proteolysis to generate a variety of antimicrobial hemocidins, enabling to compete with the other microorganisms of the same physiological niche using the microbicidal peptides generated from the host protein. Plays a key role in defense against host by cleaving histatin-5 (Hst 5), a peptide from human saliva that carries out fungicidal activity. The cleavage rate decreases in an order of SAP2 &gt; SAP9 &gt; SAP3 &gt; SAP7 &gt; SAP4 &gt; SAP1 &gt; SAP8. The hydrolysis of Hst 5 by SAP8 causes production of the DSHAKRHHGY, HHSHRGY and FHEKHHSHRGY peptides. This is Secreted aspartic protease 8 from Candida albicans (Yeast).